The primary structure comprises 607 residues: MTTETEKRALEDDTVESKRIKYDKGIAPIKPEFIVENPSVPADDRYVNDDDAEAGDRNGEEKGKKKKRGQNKKRDMRQQHEEVRLCSSLLDPSNPGTCRFGPEHCRSTHDVTTYLAAKAPDIDGVCPVFKSIGYCPAGLKCRWLNSHYEDGKLKRDQSQIDAYASSGQGEVNKISTEAKLALQKKKYLFEVSDNVIKYLDSQVQSDENIAKREEAKENNASYVEAPFKIAEKKKLDLRGAKIVSPLTTVGNLPYRRLMKTLGADVTYSEMALSLPLLQATNSEWALPKAHSSEYPGFGVQIATSKHWAAAKAAEVIYKETTHVSELNLNCGCPIDLLYRQGQGSALMEQPARLLRILKGMNASSGDIPVTVKIRTGTKDNKNTAKSLVERVLAENDVAAITLHGRSRQQRYTKDADWEYIKEVGAVVTEWNNKKEEDKESSETNRTNFVGNGDVFTHEDWYNAVNTEGVDSVMVARGALIKPWIFEEVEAQQYLDKSATERLDILRKFADFSLEHWGSDEYGVGLSRRFMCEFLSFTHRYIPVGILERLPPKINQRPPQWRGRNELETLLGSTDYKDWIKITEMFYGKTGDNFTFIPKHKSNAYESG.

Residues Ala-27 to Ser-88 form a disordered region. Basic and acidic residues-rich tracts occupy residues Ala-42–Gly-63 and Lys-72–Arg-84. 2 consecutive C3H1-type zinc fingers follow at residues Glu-81–Thr-112 and Val-125–Asp-150. Residues Pro-245 to Thr-247 and Gln-300 contribute to the FMN site. Cys-332 functions as the Proton donor in the catalytic mechanism. Residues Lys-372, His-403, Asn-451–Asp-453, and Ala-475–Arg-476 contribute to the FMN site.

Belongs to the Dus family. Dus3 subfamily. It depends on FMN as a cofactor.

The protein localises to the cytoplasm. It is found in the nucleus. It carries out the reaction 5,6-dihydrouridine(47) in tRNA + NAD(+) = uridine(47) in tRNA + NADH + H(+). The enzyme catalyses 5,6-dihydrouridine(47) in tRNA + NADP(+) = uridine(47) in tRNA + NADPH + H(+). The catalysed reaction is a 5,6-dihydrouridine in mRNA + NAD(+) = a uridine in mRNA + NADH + H(+). It catalyses the reaction a 5,6-dihydrouridine in mRNA + NADP(+) = a uridine in mRNA + NADPH + H(+). Functionally, catalyzes the synthesis of dihydrouridine, a modified base found in the D-loop of most tRNAs. Specifically modifies U47 in cytoplasmic tRNAs. Catalyzes the synthesis of dihydrouridine in some mRNAs, thereby affecting their translation. The protein is tRNA-dihydrouridine(47) synthase [NAD(P)(+)] (DUS3) of Meyerozyma guilliermondii (strain ATCC 6260 / CBS 566 / DSM 6381 / JCM 1539 / NBRC 10279 / NRRL Y-324) (Yeast).